A 244-amino-acid chain; its full sequence is uncharacterized protein (244 aa).

The tract at residues 30–49 (RETNESPKSQNPSEEATTVN) is disordered. A compositionally biased stretch (polar residues) spans 35–49 (SPKSQNPSEEATTVN). 4 helical membrane-spanning segments follow: residues 96–116 (LWGT…LSNS), 128–148 (LLFI…FGLF), 171–191 (GFFI…TIAF), and 194–214 (FVTI…HPLS). Residues 224–244 (QLDGSGERKTDSSLVHQNPPN) form a disordered region. Positions 235–244 (SSLVHQNPPN) are enriched in polar residues.

Its subcellular location is the nucleus membrane. This is an uncharacterized protein from Schizosaccharomyces pombe (strain 972 / ATCC 24843) (Fission yeast).